The primary structure comprises 245 residues: 2,3,4,5-tetrahydropyridine-2,6-dicarboxylate N-acetyltransferase (245 aa).

Belongs to the transferase hexapeptide repeat family. DapH subfamily.

It carries out the reaction (S)-2,3,4,5-tetrahydrodipicolinate + acetyl-CoA + H2O = L-2-acetamido-6-oxoheptanedioate + CoA. It participates in amino-acid biosynthesis; L-lysine biosynthesis via DAP pathway; LL-2,6-diaminopimelate from (S)-tetrahydrodipicolinate (acetylase route): step 1/3. Functionally, catalyzes the transfer of an acetyl group from acetyl-CoA to tetrahydrodipicolinate. In Methanopyrus kandleri (strain AV19 / DSM 6324 / JCM 9639 / NBRC 100938), this protein is 2,3,4,5-tetrahydropyridine-2,6-dicarboxylate N-acetyltransferase.